We begin with the raw amino-acid sequence, 352 residues long: Gamma-aminobutyric acid-binding protein (352 aa).

A signal peptide spans 1-28 (MFKSLHQYAHVFSRLSLFGLAFAAAAQA).

The protein belongs to the bacterial solute-binding protein 1 family.

It localises to the periplasm. Binds specifically gamma-aminobutyric acid (GABA) with nanomolar affinity. Does not bind structurally related compounds such as 4-aminovaleric acid, spermidine, histamine and butyric acid. The protein is Gamma-aminobutyric acid-binding protein of Pseudomonas aeruginosa (strain ATCC 15692 / DSM 22644 / CIP 104116 / JCM 14847 / LMG 12228 / 1C / PRS 101 / PAO1).